A 488-amino-acid polypeptide reads, in one-letter code: 3-octaprenyl-4-hydroxybenzoate carboxy-lyase (488 aa).

N172 contacts Mn(2+). Prenylated FMN contacts are provided by residues 175–177 (IYR), 189–191 (RWL), and 194–195 (RG). E238 contributes to the Mn(2+) binding site. D287 serves as the catalytic Proton donor.

This sequence belongs to the UbiD family. As to quaternary structure, homohexamer. Prenylated FMN is required as a cofactor. It depends on Mn(2+) as a cofactor.

It is found in the cell membrane. The enzyme catalyses a 4-hydroxy-3-(all-trans-polyprenyl)benzoate + H(+) = a 2-(all-trans-polyprenyl)phenol + CO2. It functions in the pathway cofactor biosynthesis; ubiquinone biosynthesis. In terms of biological role, catalyzes the decarboxylation of 3-octaprenyl-4-hydroxy benzoate to 2-octaprenylphenol, an intermediate step in ubiquinone biosynthesis. This chain is 3-octaprenyl-4-hydroxybenzoate carboxy-lyase, found in Pseudomonas fluorescens (strain Pf0-1).